We begin with the raw amino-acid sequence, 451 residues long: Tubulin gamma-1 chain (451 aa).

142–148 (AGGTGSG) is a binding site for GTP.

It belongs to the tubulin family.

The protein localises to the cytoplasm. The protein resides in the cytoskeleton. It localises to the microtubule organizing center. Its subcellular location is the centrosome. It is found in the spindle. Functionally, tubulin is the major constituent of microtubules. The gamma chain is found at microtubule organizing centers (MTOC) such as the spindle poles or the centrosome, suggesting that it is involved in the minus-end nucleation of microtubule assembly. The polypeptide is Tubulin gamma-1 chain (tubg1) (Xenopus laevis (African clawed frog)).